The sequence spans 879 residues: Protein translocase subunit SecA (879 aa).

Residues Gln-86, 104–108 (GEGKT), and Asp-500 each bind ATP. Zn(2+) is bound by residues Cys-863, Cys-865, Cys-874, and His-875.

This sequence belongs to the SecA family. In terms of assembly, monomer and homodimer. Part of the essential Sec protein translocation apparatus which comprises SecA, SecYEG and auxiliary proteins SecDF-YajC and YidC. It depends on Zn(2+) as a cofactor.

It is found in the cell inner membrane. The protein resides in the cytoplasm. It catalyses the reaction ATP + H2O + cellular proteinSide 1 = ADP + phosphate + cellular proteinSide 2.. Its function is as follows. Part of the Sec protein translocase complex. Interacts with the SecYEG preprotein conducting channel. Has a central role in coupling the hydrolysis of ATP to the transfer of proteins into and across the cell membrane, serving both as a receptor for the preprotein-SecB complex and as an ATP-driven molecular motor driving the stepwise translocation of polypeptide chains across the membrane. The chain is Protein translocase subunit SecA from Orientia tsutsugamushi (strain Ikeda) (Rickettsia tsutsugamushi).